Consider the following 318-residue polypeptide: Taste receptor type 2 member 117 (318 aa).

At 1–16 the chain is on the extracellular side; the sequence is MQHNLKTIFVISHSTL. A helical membrane pass occupies residues 17 to 37; that stretch reads TIILFTELVTGIIGNGFMALV. Over 38 to 53 the chain is Cytoplasmic; it reads HCMDWLRRKKISLVNQ. A helical transmembrane segment spans residues 54–74; sequence ILTALAISRIFQLCLLFISLV. Topologically, residues 75 to 93 are extracellular; sequence ISFSYPDLTTTSLIKVTCN. A helical transmembrane segment spans residues 94–114; that stretch reads LWIIVNHFNIWLATCLGIFYF. Over 115 to 134 the chain is Cytoplasmic; sequence LKISNFSNSLFLYLKWRVEK. The helical transmembrane segment at 135–155 threads the bilayer; sequence VVLVTLLVSLVLLTLNSLLIN. Residues 156–189 are Extracellular-facing; that stretch reads LEINICINEYQRNITYSFNSYYHANCHRQMLSLH. N-linked (GlcNAc...) asparagine glycosylation is present at N168. Residues 190 to 210 traverse the membrane as a helical segment; that stretch reads IIFLSVPFVLSLSTFLLLIFS. At 211–238 the chain is on the cytoplasmic side; the sequence is LGTHHKKMQQHVQGRRDASTMAHFKALQ. The chain crosses the membrane as a helical span at residues 239-259; that stretch reads TVIAFLLLYSIFILSVLVQIW. The Extracellular segment spans residues 260 to 268; sequence KYELLKKNL. A helical transmembrane segment spans residues 269–289; sequence FILFCQVAYVAFPSFHSYILI. Residues 290 to 318 lie on the Cytoplasmic side of the membrane; sequence LGDMKMRQACLSVLWWQKFRKNYVEPLDL.

The protein belongs to the G-protein coupled receptor T2R family.

The protein localises to the membrane. Its function is as follows. Putative taste receptor which may play a role in the perception of bitterness. The sequence is that of Taste receptor type 2 member 117 from Rattus norvegicus (Rat).